The sequence spans 84 residues: Mu-conotoxin-like Cal 12.2b (84 aa).

The first 19 residues, 1 to 19 (MKLTCVLVVLLLVLPFGDL), serve as a signal peptide directing secretion. The propeptide occupies 20–42 (ITTSNTEDNKRGATPWQNSLKAR). Intrachain disulfides connect Cys45-Cys57, Cys52-Cys65, Cys59-Cys70, and Cys64-Cys76. 6'-bromotryptophan is present on Trp72. Pro77 carries the 4-hydroxyproline modification. At Trp81 the chain carries 6'-bromotryptophan.

The protein belongs to the conotoxin O1 superfamily. As to expression, expressed by the venom duct.

It is found in the secreted. Mu-conotoxins block voltage-gated sodium channels. This toxin reversibly blocks voltage-gated sodium channel in cephalopods, with no alteration in the voltage dependence of sodium conductance or on the kinetics of inactivation. This Californiconus californicus (California cone) protein is Mu-conotoxin-like Cal 12.2b.